A 284-amino-acid polypeptide reads, in one-letter code: Shikimate dehydrogenase (NADP(+)) (284 aa).

Residues 20–22 and Ser-67 contribute to the shikimate site; that span reads SIS. The active-site Proton acceptor is the Lys-71. Shikimate-binding residues include Asn-92 and Asp-107. Residues 129-133 and Val-227 each bind NADP(+); that span reads GAGGA. A shikimate-binding site is contributed by Tyr-229. NADP(+) is bound at residue Gly-250.

This sequence belongs to the shikimate dehydrogenase family. Homodimer.

The enzyme catalyses shikimate + NADP(+) = 3-dehydroshikimate + NADPH + H(+). It functions in the pathway metabolic intermediate biosynthesis; chorismate biosynthesis; chorismate from D-erythrose 4-phosphate and phosphoenolpyruvate: step 4/7. Its function is as follows. Involved in the biosynthesis of the chorismate, which leads to the biosynthesis of aromatic amino acids. Catalyzes the reversible NADPH linked reduction of 3-dehydroshikimate (DHSA) to yield shikimate (SA). This is Shikimate dehydrogenase (NADP(+)) from Streptococcus sanguinis (strain SK36).